The primary structure comprises 62 residues: Cytotoxin 11 (62 aa).

4 disulfides stabilise this stretch: cysteine 3–cysteine 22, cysteine 15–cysteine 40, cysteine 44–cysteine 55, and cysteine 56–cysteine 61.

This sequence belongs to the three-finger toxin family. Short-chain subfamily. Orphan group XV sub-subfamily. As to expression, expressed by the venom gland.

Its subcellular location is the secreted. The protein localises to the target cell membrane. Functionally, has low cytotoxic activity. In Naja annulifera (Banded Egyptian cobra), this protein is Cytotoxin 11.